The primary structure comprises 235 residues: Carboxy-S-adenosyl-L-methionine synthase (235 aa).

S-adenosyl-L-methionine-binding positions include tyrosine 35, 60 to 62, 83 to 84, asparagine 124, and arginine 191; these read GCS and DN.

This sequence belongs to the class I-like SAM-binding methyltransferase superfamily. Cx-SAM synthase family. As to quaternary structure, homodimer.

It carries out the reaction prephenate + S-adenosyl-L-methionine = carboxy-S-adenosyl-L-methionine + 3-phenylpyruvate + H2O. Its function is as follows. Catalyzes the conversion of S-adenosyl-L-methionine (SAM) to carboxy-S-adenosyl-L-methionine (Cx-SAM). This is Carboxy-S-adenosyl-L-methionine synthase from Campylobacter jejuni subsp. jejuni serotype O:2 (strain ATCC 700819 / NCTC 11168).